We begin with the raw amino-acid sequence, 87 residues long: Glutaredoxin (87 aa).

Residues 1–87 enclose the Glutaredoxin domain; the sequence is MFVVIFGRPG…YAKENLGLFD (87 aa). Cys11 and Cys14 are joined by a disulfide.

It belongs to the glutaredoxin family. Monomer.

The protein localises to the cytoplasm. Functionally, has a glutathione-disulfide oxidoreductase activity in the presence of NADPH and glutathione reductase. Reduces low molecular weight disulfides and proteins. The protein is Glutaredoxin (grx) of Vibrio cholerae serotype O1 (strain ATCC 39315 / El Tor Inaba N16961).